Reading from the N-terminus, the 366-residue chain is Capsular polysaccharide phosphotransferase LcbA (366 aa).

The protein belongs to the stealth family.

The polypeptide is Capsular polysaccharide phosphotransferase LcbA (lcbA) (Neisseria meningitidis).